The primary structure comprises 122 residues: NADH-quinone oxidoreductase subunit A (122 aa).

The next 3 membrane-spanning stretches (helical) occupy residues 12–32 (ILLF…AGWL), 67–87 (IAIL…WAVV), and 91–111 (IGWF…VGFI).

The protein belongs to the complex I subunit 3 family. In terms of assembly, NDH-1 is composed of 14 different subunits. Subunits NuoA, H, J, K, L, M, N constitute the membrane sector of the complex.

The protein resides in the cell inner membrane. It catalyses the reaction a quinone + NADH + 5 H(+)(in) = a quinol + NAD(+) + 4 H(+)(out). Functionally, NDH-1 shuttles electrons from NADH, via FMN and iron-sulfur (Fe-S) centers, to quinones in the respiratory chain. The immediate electron acceptor for the enzyme in this species is believed to be ubiquinone. Couples the redox reaction to proton translocation (for every two electrons transferred, four hydrogen ions are translocated across the cytoplasmic membrane), and thus conserves the redox energy in a proton gradient. The chain is NADH-quinone oxidoreductase subunit A from Nitrosomonas europaea (strain ATCC 19718 / CIP 103999 / KCTC 2705 / NBRC 14298).